The primary structure comprises 481 residues: Proline--tRNA ligase (481 aa).

Belongs to the class-II aminoacyl-tRNA synthetase family. ProS type 3 subfamily. As to quaternary structure, homodimer.

The protein localises to the cytoplasm. The catalysed reaction is tRNA(Pro) + L-proline + ATP = L-prolyl-tRNA(Pro) + AMP + diphosphate. Catalyzes the attachment of proline to tRNA(Pro) in a two-step reaction: proline is first activated by ATP to form Pro-AMP and then transferred to the acceptor end of tRNA(Pro). The polypeptide is Proline--tRNA ligase (Chlorobium chlorochromatii (strain CaD3)).